A 349-amino-acid chain; its full sequence is Rhodopsin (349 aa).

Residues 1-33 (TEGPYFYIPMSNATGVVRSPYEYPQYYLVYPAA) are Extracellular-facing. A glycan (N-linked (GlcNAc...) asparagine) is linked at Asn-12. A helical membrane pass occupies residues 34-58 (FAVLGAYMFFLIIFGFPVNFLTLYV). The Cytoplasmic segment spans residues 59-70 (TIEHKKLRTPLN). Residues 71–93 (YILLNLAVADLFMVIGGFTTTIY) form a helical membrane-spanning segment. At 94–107 (TSMHGYFVLGRLGC) the chain is on the extracellular side. Cys-107 and Cys-184 are joined by a disulfide. The helical transmembrane segment at 108-130 (NLEGFSATLGGMISLWSLVVLAV) threads the bilayer. A 'Ionic lock' involved in activated form stabilization motif is present at residues 131-133 (ERW). Over 131–149 (ERWVVVCKPMSNFRFGENH) the chain is Cytoplasmic. A helical membrane pass occupies residues 150-170 (AIMGVTLTWAMGLACTVPPLV). Topologically, residues 171 to 199 (GWSRYIPEGMQCSCGIDYYTRAEGFNNES) are extracellular. A glycan (N-linked (GlcNAc...) asparagine) is linked at Asn-197. A helical transmembrane segment spans residues 200-221 (FVLYMFVCHFSFPLVVIFFCYG). At 222–249 (RLLCAVKEAAAAQQESETTQRAEREVTR) the chain is on the cytoplasmic side. The chain crosses the membrane as a helical span at residues 250–271 (MVILMVIGFLVCWLPYASVAWY). Over 272 to 283 (IFTHQGSEFGPL) the chain is Extracellular. Residues 284–305 (FMTIPAFFAKSSAIYNPVIYIC) traverse the membrane as a helical segment. N6-(retinylidene)lysine is present on Lys-293. Topologically, residues 306–349 (LNKQFRQCMLTTLFCGKNPFEEEEGASSTKTEASSASSSSVSPA) are cytoplasmic. Cys-320 carries S-palmitoyl cysteine lipidation. The segment at 326-349 (EEEEGASSTKTEASSASSSSVSPA) is disordered. Positions 331–349 (ASSTKTEASSASSSSVSPA) are enriched in low complexity.

This sequence belongs to the G-protein coupled receptor 1 family. Opsin subfamily. Post-translationally, phosphorylated on some or all of the serine and threonine residues present in the C-terminal region. In terms of processing, contains one covalently linked retinal chromophore.

It localises to the membrane. It is found in the cell projection. The protein resides in the cilium. The protein localises to the photoreceptor outer segment. Photoreceptor required for image-forming vision at low light intensity. While most salt water fish species use retinal as chromophore, most freshwater fish use 3-dehydroretinal, or a mixture of retinal and 3-dehydroretinal. Light-induced isomerization of 11-cis to all-trans retinal triggers a conformational change that activates signaling via G-proteins. Subsequent receptor phosphorylation mediates displacement of the bound G-protein alpha subunit by arrestin and terminates signaling. This chain is Rhodopsin (rho), found in Myripristis berndti (Bigscale soldierfish).